The primary structure comprises 427 residues: MKLKTNIRHLHGSIRVPGDKSISHRSIIFGSLAEGETKVYDILRGEDVLSTMQVFRDLGVEIEDKDGVITIQGVGMAGLKAPQNALNMGNSGTSIRLISGVLAGADFEVEMFGDDSLSKRPMDRVTLPLKKMGVSISGQTERDLPPLRLKGTKNLRPIHYELPIASAQVKSALMFAALQAKGESVIIEKECTRNHTEDMLKQFGGHLSVDGKKITVQGPQKLTGQKVVVPGDISSAAFWLVAGLIVPNSRLVLQNVGINETRTGIIDVIRAMGGKLEITEIDPVAKSSTLTVESSDLKGTEIGGALIPRLIDELPIIALLATQAQGVTVIKDAEELKVKETDRIQVVADALNSMGADITPTADGMIIKGKSALHGARVNTFGDHRIGMMTAIAALLVADGEVELDRAEAINTSYPSFFDDLESLIHG.

Residues lysine 20, serine 21, and arginine 25 each coordinate 3-phosphoshikimate. Lysine 20 contributes to the phosphoenolpyruvate binding site. Positions 92 and 120 each coordinate phosphoenolpyruvate. Positions 166, 168, 312, and 339 each coordinate 3-phosphoshikimate. Position 168 (glutamine 168) interacts with phosphoenolpyruvate. The active-site Proton acceptor is aspartate 312. Positions 343 and 385 each coordinate phosphoenolpyruvate.

It belongs to the EPSP synthase family. In terms of assembly, monomer.

The protein localises to the cytoplasm. It carries out the reaction 3-phosphoshikimate + phosphoenolpyruvate = 5-O-(1-carboxyvinyl)-3-phosphoshikimate + phosphate. The protein operates within metabolic intermediate biosynthesis; chorismate biosynthesis; chorismate from D-erythrose 4-phosphate and phosphoenolpyruvate: step 6/7. Functionally, catalyzes the transfer of the enolpyruvyl moiety of phosphoenolpyruvate (PEP) to the 5-hydroxyl of shikimate-3-phosphate (S3P) to produce enolpyruvyl shikimate-3-phosphate and inorganic phosphate. The sequence is that of 3-phosphoshikimate 1-carboxyvinyltransferase from Streptococcus pneumoniae (strain 70585).